The sequence spans 111 residues: Resistin-like gamma (111 aa).

A signal peptide spans 1-23; sequence MKTAICSLLICIFLLQLMVPVNT. 5 disulfide bridges follow: Cys-55/Cys-108, Cys-67/Cys-107, Cys-76/Cys-93, Cys-78/Cys-95, and Cys-82/Cys-97.

It belongs to the resistin/FIZZ family. Homodimer. Heterodimer with RETNLB. In terms of tissue distribution, highly expressed in bone marrow, spleen and white blood cells. Also detected at low levels in thymus, lung, trachea, white adipose tissue, nasal respiratory epithelium, colon, small intestine, kidney, liver, and heart.

It localises to the secreted. In terms of biological role, probable hormone. Promotes chemotaxis in myeloid cells. In Rattus norvegicus (Rat), this protein is Resistin-like gamma.